A 294-amino-acid polypeptide reads, in one-letter code: NAD kinase (294 aa).

Residue Asp-74 is the Proton acceptor of the active site. NAD(+) is bound by residues 74–75 (DG), Lys-79, 149–150 (NE), Asp-179, 190–195 (TGYSLS), and Ala-214.

It belongs to the NAD kinase family. A divalent metal cation is required as a cofactor.

It localises to the cytoplasm. It carries out the reaction NAD(+) + ATP = ADP + NADP(+) + H(+). Involved in the regulation of the intracellular balance of NAD and NADP, and is a key enzyme in the biosynthesis of NADP. Catalyzes specifically the phosphorylation on 2'-hydroxyl of the adenosine moiety of NAD to yield NADP. This Christiangramia forsetii (strain DSM 17595 / CGMCC 1.15422 / KT0803) (Gramella forsetii) protein is NAD kinase.